The following is a 611-amino-acid chain: Protein ral2 (611 aa).

Kelch repeat units follow at residues 43–91 (EAFV…HSGD), 96–149 (KLIF…EVNG), and 175–224 (YLII…VINK). Position 604 is a phosphoserine (serine 604).

In terms of biological role, essential for mating and for recognition of the mating pheromone, and for the determination of cell shape. Implicated in activation of the ras1 protein. The polypeptide is Protein ral2 (ral2) (Schizosaccharomyces pombe (strain 972 / ATCC 24843) (Fission yeast)).